A 386-amino-acid chain; its full sequence is tRNA N6-adenosine threonylcarbamoyltransferase (386 aa).

Residues histidine 141, histidine 145, and tyrosine 162 each contribute to the a divalent metal cation site. Substrate-binding positions include 162–166 (YVSGG), aspartate 194, glycine 209, glutamate 213, and asparagine 315. A divalent metal cation is bound at residue aspartate 344.

This sequence belongs to the KAE1 / TsaD family. As to quaternary structure, component of the EKC/KEOPS complex composed of at least BUD32, CGI121, GON7, KAE1 and PCC1; the whole complex dimerizes. The cofactor is a divalent metal cation.

The protein localises to the cytoplasm. It localises to the nucleus. The catalysed reaction is L-threonylcarbamoyladenylate + adenosine(37) in tRNA = N(6)-L-threonylcarbamoyladenosine(37) in tRNA + AMP + H(+). Its function is as follows. Component of the EKC/KEOPS complex that is required for the formation of a threonylcarbamoyl group on adenosine at position 37 (t(6)A37) in tRNAs that read codons beginning with adenine. The complex is probably involved in the transfer of the threonylcarbamoyl moiety of threonylcarbamoyl-AMP (TC-AMP) to the N6 group of A37. KAE1 likely plays a direct catalytic role in this reaction, but requires other protein(s) of the complex to fulfill this activity. The EKC/KEOPS complex also promotes both telomere uncapping and telomere elongation. The complex is required for efficient recruitment of transcriptional coactivators. The chain is tRNA N6-adenosine threonylcarbamoyltransferase from Saccharomyces cerevisiae (strain ATCC 204508 / S288c) (Baker's yeast).